A 210-amino-acid chain; its full sequence is Imidazoleglycerol-phosphate dehydratase (210 aa).

This sequence belongs to the imidazoleglycerol-phosphate dehydratase family.

The protein localises to the cytoplasm. It catalyses the reaction D-erythro-1-(imidazol-4-yl)glycerol 3-phosphate = 3-(imidazol-4-yl)-2-oxopropyl phosphate + H2O. It participates in amino-acid biosynthesis; L-histidine biosynthesis; L-histidine from 5-phospho-alpha-D-ribose 1-diphosphate: step 6/9. This chain is Imidazoleglycerol-phosphate dehydratase, found in Acidovorax ebreus (strain TPSY) (Diaphorobacter sp. (strain TPSY)).